The primary structure comprises 311 residues: MKPRKVMIIGAGNVGSAAAHAFVNQKFVEELILVDLNKERVEGNRKDLADAAAFMSGKMDISVREASDCADVDIAVITVTAGPLKEGQTRLDELRSTSRIVASIVPEMMKGGFKGIFLIATNPCDIITYQVWKLSGLPREQVLGTGVWLDTTRLRRLLAEKLDIAAQSIDAFILGEHGDSQFPVWSHSSIYGKPVNEYSMEKLGESLDLKLIGETARDTGFEIYHQKGCTEYGIAGTIVEICRHIFSGSQRALTVSCVLDGEYGQTGLAIGVPAVLSQNGVKEIISLKLNEQEQQAFDHSAAVIKENIKSI.

NAD(+)-binding residues include valine 14, aspartate 35, and arginine 40. Arginine 90 is a binding site for substrate. Residues serine 103, 120-122 (ATN), and threonine 145 each bind NAD(+). 122–125 (NPCD) provides a ligand contact to substrate. Position 150–153 (150–153 (DTTR)) interacts with substrate. Histidine 177 functions as the Proton acceptor in the catalytic mechanism. Residue threonine 230 coordinates substrate.

It belongs to the LDH/MDH superfamily. LDH family. In terms of assembly, homotetramer.

It is found in the cytoplasm. It carries out the reaction (S)-lactate + NAD(+) = pyruvate + NADH + H(+). It participates in fermentation; pyruvate fermentation to lactate; (S)-lactate from pyruvate: step 1/1. Functionally, catalyzes the conversion of lactate to pyruvate. The sequence is that of L-lactate dehydrogenase 2 from Listeria innocua serovar 6a (strain ATCC BAA-680 / CLIP 11262).